We begin with the raw amino-acid sequence, 370 residues long: Putative glutamate--cysteine ligase 2 (370 aa).

Belongs to the glutamate--cysteine ligase type 2 family. YbdK subfamily.

It carries out the reaction L-cysteine + L-glutamate + ATP = gamma-L-glutamyl-L-cysteine + ADP + phosphate + H(+). ATP-dependent carboxylate-amine ligase which exhibits weak glutamate--cysteine ligase activity. In Herminiimonas arsenicoxydans, this protein is Putative glutamate--cysteine ligase 2.